The chain runs to 156 residues: ATP synthase subunit b (156 aa).

The chain crosses the membrane as a helical span at residues 11 to 31 (AIAFVLFVLFCMKYVWPPLMA).

Belongs to the ATPase B chain family. As to quaternary structure, F-type ATPases have 2 components, F(1) - the catalytic core - and F(0) - the membrane proton channel. F(1) has five subunits: alpha(3), beta(3), gamma(1), delta(1), epsilon(1). F(0) has three main subunits: a(1), b(2) and c(10-14). The alpha and beta chains form an alternating ring which encloses part of the gamma chain. F(1) is attached to F(0) by a central stalk formed by the gamma and epsilon chains, while a peripheral stalk is formed by the delta and b chains.

Its subcellular location is the cell inner membrane. In terms of biological role, f(1)F(0) ATP synthase produces ATP from ADP in the presence of a proton or sodium gradient. F-type ATPases consist of two structural domains, F(1) containing the extramembraneous catalytic core and F(0) containing the membrane proton channel, linked together by a central stalk and a peripheral stalk. During catalysis, ATP synthesis in the catalytic domain of F(1) is coupled via a rotary mechanism of the central stalk subunits to proton translocation. Functionally, component of the F(0) channel, it forms part of the peripheral stalk, linking F(1) to F(0). The chain is ATP synthase subunit b from Citrobacter koseri (strain ATCC BAA-895 / CDC 4225-83 / SGSC4696).